A 143-amino-acid chain; its full sequence is Transcriptional regulator MraZ (143 aa).

SpoVT-AbrB domains follow at residues 5–47 (EYQH…PKEE) and 76–119 (AGEC…SRER).

Belongs to the MraZ family. Forms oligomers.

The protein localises to the cytoplasm. It localises to the nucleoid. In Heliobacterium modesticaldum (strain ATCC 51547 / Ice1), this protein is Transcriptional regulator MraZ.